An 84-amino-acid chain; its full sequence is Large ribosomal subunit protein bL31 (84 aa).

Disordered regions lie at residues 1–41 (MQHD…DSTN) and 63–84 (RRYG…AADE). The segment covering 21 to 30 (EITTRSTMET) has biased composition (polar residues). Over residues 68–84 (TDDDEGDDEETEDAADE) the composition is skewed to acidic residues.

Belongs to the bacterial ribosomal protein bL31 family. Type A subfamily. As to quaternary structure, part of the 50S ribosomal subunit.

Binds the 23S rRNA. This chain is Large ribosomal subunit protein bL31, found in Salinibacter ruber (strain DSM 13855 / M31).